A 146-amino-acid polypeptide reads, in one-letter code: Acireductone dioxygenase (146 aa).

Fe(2+) is bound by residues histidine 71, histidine 73, glutamate 77, and histidine 116. Ni(2+) contacts are provided by histidine 71, histidine 73, glutamate 77, and histidine 116.

Belongs to the acireductone dioxygenase (ARD) family. Fe(2+) serves as cofactor. It depends on Ni(2+) as a cofactor.

The protein localises to the cytoplasm. It localises to the nucleus. The catalysed reaction is 1,2-dihydroxy-5-(methylsulfanyl)pent-1-en-3-one + O2 = 4-methylsulfanyl-2-oxobutanoate + formate + 2 H(+). The enzyme catalyses 1,2-dihydroxy-5-(methylsulfanyl)pent-1-en-3-one + O2 = 3-(methylsulfanyl)propanoate + CO + formate + 2 H(+). Its pathway is amino-acid biosynthesis; L-methionine biosynthesis via salvage pathway; L-methionine from S-methyl-5-thio-alpha-D-ribose 1-phosphate: step 5/6. Functionally, catalyzes 2 different reactions between oxygen and the acireductone 1,2-dihydroxy-3-keto-5-methylthiopentene (DHK-MTPene) depending upon the metal bound in the active site. Fe-containing acireductone dioxygenase (Fe-ARD) produces formate and 2-keto-4-methylthiobutyrate (KMTB), the alpha-ketoacid precursor of methionine in the methionine recycle pathway. Ni-containing acireductone dioxygenase (Ni-ARD) produces methylthiopropionate, carbon monoxide and formate, and does not lie on the methionine recycle pathway. In Heterostelium pallidum (strain ATCC 26659 / Pp 5 / PN500) (Cellular slime mold), this protein is Acireductone dioxygenase.